Here is a 305-residue protein sequence, read N- to C-terminus: Ornithine carbamoyltransferase (305 aa).

Carbamoyl phosphate is bound by residues 52–55 (STRT), Gln79, Arg103, and 130–133 (HPCQ). L-ornithine is bound by residues Asn161, Asp222, and 226 to 227 (SM). Residues 262-263 (CL) and Arg290 contribute to the carbamoyl phosphate site.

This sequence belongs to the aspartate/ornithine carbamoyltransferase superfamily. OTCase family.

It localises to the cytoplasm. The catalysed reaction is carbamoyl phosphate + L-ornithine = L-citrulline + phosphate + H(+). The protein operates within amino-acid biosynthesis; L-arginine biosynthesis; L-arginine from L-ornithine and carbamoyl phosphate: step 1/3. Reversibly catalyzes the transfer of the carbamoyl group from carbamoyl phosphate (CP) to the N(epsilon) atom of ornithine (ORN) to produce L-citrulline. The sequence is that of Ornithine carbamoyltransferase from Pelobacter propionicus (strain DSM 2379 / NBRC 103807 / OttBd1).